A 503-amino-acid chain; its full sequence is AMP phosphorylase (503 aa).

AMP is bound by residues Gly-168, 194–199, and Thr-203; that span reads SRAITS. Residue Asp-256 is the Proton donor of the active site. The AMP site is built by Ser-264 and Lys-288.

Belongs to the thymidine/pyrimidine-nucleoside phosphorylase family. Type 2 subfamily.

It catalyses the reaction AMP + phosphate = alpha-D-ribose 1,5-bisphosphate + adenine. It carries out the reaction CMP + phosphate = cytosine + alpha-D-ribose 1,5-bisphosphate. The enzyme catalyses UMP + phosphate = alpha-D-ribose 1,5-bisphosphate + uracil. Catalyzes the conversion of AMP and phosphate to adenine and ribose 1,5-bisphosphate (R15P). Exhibits phosphorylase activity toward CMP and UMP in addition to AMP. Functions in an archaeal AMP degradation pathway, together with R15P isomerase and RubisCO. The chain is AMP phosphorylase (deoA) from Pyrococcus abyssi (strain GE5 / Orsay).